A 157-amino-acid polypeptide reads, in one-letter code: Small ribosomal subunit protein uS7 (157 aa).

It belongs to the universal ribosomal protein uS7 family. Part of the 30S ribosomal subunit. Contacts proteins S9 and S11.

Functionally, one of the primary rRNA binding proteins, it binds directly to 16S rRNA where it nucleates assembly of the head domain of the 30S subunit. Is located at the subunit interface close to the decoding center, probably blocks exit of the E-site tRNA. This chain is Small ribosomal subunit protein uS7, found in Polaromonas naphthalenivorans (strain CJ2).